A 124-amino-acid chain; its full sequence is MAISKDDILEAVGNLTVLELNDLVKAFEEKFGVSAAAMAAPAAGGAAGGAAAEEQTEFTVILADFGANKVGVIKAVREITGLGLKEAKDLVDAAPKPLKEGVSKADAEAAKKKLEEAGAKAEIK.

It belongs to the bacterial ribosomal protein bL12 family. In terms of assembly, homodimer. Part of the ribosomal stalk of the 50S ribosomal subunit. Forms a multimeric L10(L12)X complex, where L10 forms an elongated spine to which 2 to 4 L12 dimers bind in a sequential fashion. Binds GTP-bound translation factors.

In terms of biological role, forms part of the ribosomal stalk which helps the ribosome interact with GTP-bound translation factors. Is thus essential for accurate translation. The polypeptide is Large ribosomal subunit protein bL12 (Herminiimonas arsenicoxydans).